Reading from the N-terminus, the 213-residue chain is Thiamine-phosphate synthase (213 aa).

4-amino-2-methyl-5-(diphosphooxymethyl)pyrimidine contacts are provided by residues 41–45 (QFRVK) and Asn73. Residues Asp74 and Asp93 each contribute to the Mg(2+) site. 4-amino-2-methyl-5-(diphosphooxymethyl)pyrimidine is bound at residue Thr112. Residue 139 to 141 (SAT) coordinates 2-[(2R,5Z)-2-carboxy-4-methylthiazol-5(2H)-ylidene]ethyl phosphate. Lys142 provides a ligand contact to 4-amino-2-methyl-5-(diphosphooxymethyl)pyrimidine. A 2-[(2R,5Z)-2-carboxy-4-methylthiazol-5(2H)-ylidene]ethyl phosphate-binding site is contributed by Gly171.

Belongs to the thiamine-phosphate synthase family. It depends on Mg(2+) as a cofactor.

It catalyses the reaction 2-[(2R,5Z)-2-carboxy-4-methylthiazol-5(2H)-ylidene]ethyl phosphate + 4-amino-2-methyl-5-(diphosphooxymethyl)pyrimidine + 2 H(+) = thiamine phosphate + CO2 + diphosphate. The catalysed reaction is 2-(2-carboxy-4-methylthiazol-5-yl)ethyl phosphate + 4-amino-2-methyl-5-(diphosphooxymethyl)pyrimidine + 2 H(+) = thiamine phosphate + CO2 + diphosphate. It carries out the reaction 4-methyl-5-(2-phosphooxyethyl)-thiazole + 4-amino-2-methyl-5-(diphosphooxymethyl)pyrimidine + H(+) = thiamine phosphate + diphosphate. The protein operates within cofactor biosynthesis; thiamine diphosphate biosynthesis; thiamine phosphate from 4-amino-2-methyl-5-diphosphomethylpyrimidine and 4-methyl-5-(2-phosphoethyl)-thiazole: step 1/1. Condenses 4-methyl-5-(beta-hydroxyethyl)thiazole monophosphate (THZ-P) and 2-methyl-4-amino-5-hydroxymethyl pyrimidine pyrophosphate (HMP-PP) to form thiamine monophosphate (TMP). This Erythrobacter litoralis (strain HTCC2594) protein is Thiamine-phosphate synthase.